The sequence spans 105 residues: Thioredoxin (105 aa).

The Thioredoxin domain occupies 2 to 105 (VKQIESKYAF…KLEATINELI (104 aa)). N6-acetyllysine is present on K3. K8 bears the N6-succinyllysine mark. Residues C32 and C35 each act as nucleophile in the active site. C32 and C35 form a disulfide bridge. K39 carries the post-translational modification N6-acetyllysine. 2 positions are modified to S-nitrosocysteine: C62 and C69. Residue C73 is modified to S-nitrosocysteine; alternate. N6-acetyllysine; alternate is present on K94. N6-succinyllysine; alternate is present on K94.

It belongs to the thioredoxin family. As to quaternary structure, homodimer; disulfide-linked. Interacts with TXNIP through the redox-active site. Interacts with MAP3K5 and CASP3. Interacts with APEX1; the interaction stimulates the FOS/JUN AP-1 DNA-binding activity in a redox-dependent manner. Post-translationally, in the fully reduced protein, both Cys-69 and Cys-73 are nitrosylated in response to nitric oxide (NO). When two disulfide bonds are present in the protein, only Cys-73 is nitrosylated. Cys-73 can serve as donor for nitrosylation of target proteins. In terms of tissue distribution, erythrocytes.

Its subcellular location is the nucleus. The protein localises to the cytoplasm. It is found in the secreted. In terms of biological role, participates in various redox reactions through the reversible oxidation of its active center dithiol to a disulfide and catalyzes dithiol-disulfide exchange reactions. Plays a role in the reversible S-nitrosylation of cysteine residues in target proteins, and thereby contributes to the response to intracellular nitric oxide. Nitrosylates the active site Cys of CASP3 in response to nitric oxide (NO), and thereby inhibits caspase-3 activity. Induces the FOS/JUN AP-1 DNA binding activity in ionizing radiation (IR) cells through its oxidation/reduction status and stimulates AP-1 transcriptional activity. The protein is Thioredoxin (TXN) of Sus scrofa (Pig).